Consider the following 121-residue polypeptide: MARIAGIDIPSDKRVVIALTYIYGLGNKLSHKILNELNIDQNIRVKNLTEQQLSALRSEITKYNVEGDLRREVTLNIKRLMEIGAYRGLRHRKGLPVRGQKTRNNAHTVKGKPKAIAGKKK.

The tract at residues 94–121 is disordered; that stretch reads GLPVRGQKTRNNAHTVKGKPKAIAGKKK. A compositionally biased stretch (basic residues) spans 109-121; that stretch reads VKGKPKAIAGKKK.

Belongs to the universal ribosomal protein uS13 family. As to quaternary structure, part of the 30S ribosomal subunit. Forms a loose heterodimer with protein S19. Forms two bridges to the 50S subunit in the 70S ribosome.

Located at the top of the head of the 30S subunit, it contacts several helices of the 16S rRNA. In the 70S ribosome it contacts the 23S rRNA (bridge B1a) and protein L5 of the 50S subunit (bridge B1b), connecting the 2 subunits; these bridges are implicated in subunit movement. Contacts the tRNAs in the A and P-sites. The sequence is that of Small ribosomal subunit protein uS13 from Onion yellows phytoplasma (strain OY-M).